Here is a 126-residue protein sequence, read N- to C-terminus: UPF0102 protein PMT_0624 (126 aa).

Belongs to the UPF0102 family.

This Prochlorococcus marinus (strain MIT 9313) protein is UPF0102 protein PMT_0624.